The chain runs to 468 residues: UDP-N-acetylmuramoyl-L-alanine--L-glutamate ligase (468 aa).

An ATP-binding site is contributed by 122 to 128 (GTKGKST).

It belongs to the MurCDEF family. MurD2 subfamily.

The protein localises to the cytoplasm. It carries out the reaction UDP-N-acetyl-alpha-D-muramoyl-L-alanine + L-glutamate + ATP = UDP-N-acetyl-alpha-D-muramoyl-L-alanyl-L-glutamate + ADP + phosphate + H(+). The protein operates within cell wall biogenesis; peptidoglycan biosynthesis. Cell wall formation. Catalyzes the addition of L-glutamate to the nucleotide precursor UDP-N-acetylmuramoyl-L-alanine. This chain is UDP-N-acetylmuramoyl-L-alanine--L-glutamate ligase, found in Xylella fastidiosa (strain Temecula1 / ATCC 700964).